A 125-amino-acid chain; its full sequence is Holo-[acyl-carrier-protein] synthase (125 aa).

2 residues coordinate Mg(2+): aspartate 8 and glutamate 57.

Belongs to the P-Pant transferase superfamily. AcpS family. Requires Mg(2+) as cofactor.

Its subcellular location is the cytoplasm. It carries out the reaction apo-[ACP] + CoA = holo-[ACP] + adenosine 3',5'-bisphosphate + H(+). Its function is as follows. Transfers the 4'-phosphopantetheine moiety from coenzyme A to a Ser of acyl-carrier-protein. This is Holo-[acyl-carrier-protein] synthase from Geotalea daltonii (strain DSM 22248 / JCM 15807 / FRC-32) (Geobacter daltonii).